We begin with the raw amino-acid sequence, 82 residues long: Penaeidin-3d (82 aa).

The N-terminal stretch at 1 to 19 (MRLVVCLVFLASFALVCQG) is a signal peptide. The residue at position 20 (Q20) is a Pyrrolidone carboxylic acid. 3 disulfide bridges follow: C51/C66, C55/C73, and C67/C74. S81 carries the post-translational modification Serine amide.

Belongs to the penaeidin family.

Its subcellular location is the cytoplasmic granule. Functionally, antibacterial and antifungal activity. Presents chitin-binding activity. The protein is Penaeidin-3d of Penaeus vannamei (Whiteleg shrimp).